The chain runs to 439 residues: MERKEKDHLNLVVIGHVDSGKSTTTGHLIYKLGGIDERTLAKLEEKALELNKASFKYAFVLDNLKAEQERGITINCALRQFDTPSRSYTIIDAPGHKDFIKNMITGTSQADAAVLIIAAKKGEFEDGFSREGSTKDHALLAYTMGIKQAIVAINKMDTIDYDEERFNEIVENVSDHLGKIGYKKENVKYIPISGFDGDNMLEQSENLPWYKGPTLTEALDEFKVPKRPIKKPLRVPIQDVYKIAGIGTVPVGRVETGVLKRGMEVQFTTGATSEVKSLEAHHNKLEEAEPGLNVGFNVRLEAKEIKAGHVCGDAKNDPPKNAESFIAQVIVMNHPGHIKAGYQPVLDIHTAHVATKFKTLLSKNEARTGKLIEEAPKFLKNGESGIVELVPTKPLCVEEFSKYAALGRFVIRDMKRTVAVGVIQEVIHKKETKKKASKR.

Residues 6 to 229 (KDHLNLVVIG…DEFKVPKRPI (224 aa)) enclose the tr-type G domain. Residues 15 to 22 (GHVDSGKS) are G1. Residue 15–22 (GHVDSGKS) participates in GTP binding. The interval 71 to 75 (GITIN) is G2. Positions 92–95 (DAPG) are G3. Residues 92–96 (DAPGH) and 154–157 (NKMD) each bind GTP. Positions 154 to 157 (NKMD) are G4. Residues 193-195 (SGF) form a G5 region.

It belongs to the TRAFAC class translation factor GTPase superfamily. Classic translation factor GTPase family. EF-Tu/EF-1A subfamily.

Its subcellular location is the cytoplasm. Its function is as follows. This protein promotes the GTP-dependent binding of aminoacyl-tRNA to the A-site of ribosomes during protein biosynthesis. The sequence is that of Elongation factor 1-alpha 2 (EFA2) from Euplotes crassus.